A 203-amino-acid polypeptide reads, in one-letter code: Guanylate kinase (203 aa).

The 179-residue stretch at 3-181 (GTLYIVSAPS…ALDDLKAIFR (179 aa)) folds into the Guanylate kinase-like domain. Residue 10–17 (APSGAGKT) coordinates ATP.

Belongs to the guanylate kinase family.

It is found in the cytoplasm. The enzyme catalyses GMP + ATP = GDP + ADP. Functionally, essential for recycling GMP and indirectly, cGMP. This Pseudomonas aeruginosa (strain ATCC 15692 / DSM 22644 / CIP 104116 / JCM 14847 / LMG 12228 / 1C / PRS 101 / PAO1) protein is Guanylate kinase (gmk).